The primary structure comprises 411 residues: Peptidase T (411 aa).

Residue H79 participates in Zn(2+) binding. D81 is an active-site residue. Position 142 (D142) interacts with Zn(2+). Catalysis depends on E176, which acts as the Proton acceptor. Positions 177, 199, and 381 each coordinate Zn(2+).

The protein belongs to the peptidase M20B family. Requires Zn(2+) as cofactor.

It localises to the cytoplasm. The enzyme catalyses Release of the N-terminal residue from a tripeptide.. Cleaves the N-terminal amino acid of tripeptides. The sequence is that of Peptidase T from Exiguobacterium sibiricum (strain DSM 17290 / CCUG 55495 / CIP 109462 / JCM 13490 / 255-15).